The following is a 310-amino-acid chain: Probable GTP 3',8-cyclase (310 aa).

The region spanning 5–232 (RFGRPVTNLR…RRRKYFIPID (228 aa)) is the Radical SAM core domain. Arginine 14 provides a ligand contact to GTP. [4Fe-4S] cluster-binding residues include cysteine 21 and cysteine 25. Tyrosine 27 provides a ligand contact to S-adenosyl-L-methionine. Cysteine 28 is a binding site for [4Fe-4S] cluster. Position 61 (lysine 61) interacts with GTP. An S-adenosyl-L-methionine-binding site is contributed by glycine 65. Threonine 90 serves as a coordination point for GTP. An S-adenosyl-L-methionine-binding site is contributed by serine 114. Residue lysine 150 participates in GTP binding. S-adenosyl-L-methionine is bound at residue methionine 189. Positions 250 and 253 each coordinate [4Fe-4S] cluster. 255-257 (RLR) contacts GTP. A [4Fe-4S] cluster-binding site is contributed by cysteine 267.

Belongs to the radical SAM superfamily. MoaA family. It depends on [4Fe-4S] cluster as a cofactor.

The catalysed reaction is GTP + AH2 + S-adenosyl-L-methionine = (8S)-3',8-cyclo-7,8-dihydroguanosine 5'-triphosphate + 5'-deoxyadenosine + L-methionine + A + H(+). It participates in cofactor biosynthesis; molybdopterin biosynthesis. Its function is as follows. Catalyzes the cyclization of GTP to (8S)-3',8-cyclo-7,8-dihydroguanosine 5'-triphosphate. In Pyrococcus horikoshii (strain ATCC 700860 / DSM 12428 / JCM 9974 / NBRC 100139 / OT-3), this protein is Probable GTP 3',8-cyclase.